The sequence spans 148 residues: DnaJ homolog subfamily C member 24 (148 aa).

The region spanning 10–81 is the J domain; that stretch reads DWYSILGADP…ETKKKYDLQR (72 aa). The region spanning 92–147 is the DPH-type MB domain; it reads VDAQVRLEEMSWNQGDESFFLSCRCGGKYTVSKDEAQEATLISCDACSLIVELLHQ. Zn(2+) contacts are provided by C114, C116, C135, and C138.

This sequence belongs to the DPH4 family. Monomer and homooligomer. Iron binding promotes oligomerization. As to expression, detected in heart, brain, spleen, lung, liver, kidney and testis.

The protein localises to the cytoplasm. Its subcellular location is the cytoskeleton. Its pathway is protein modification; peptidyl-diphthamide biosynthesis. Its function is as follows. The iron-bound form is redox-active and can function as electron carrier. Stimulates the ATPase activity of several Hsp70-type chaperones. This ability is enhanced by iron-binding. Plays a role in the diphthamide biosynthesis, a post-translational modification of histidine which occurs in translation elongation factor 2 (EEF2). The sequence is that of DnaJ homolog subfamily C member 24 (Dnajc24) from Mus musculus (Mouse).